Reading from the N-terminus, the 571-residue chain is Penton protein (571 aa).

A disordered region spans residues 297–325 (KDDTEQGGGGAGGSNSSGSGAEENSNAAA). The span at 302-311 (QGGGGAGGSN) shows a compositional bias: gly residues. Positions 312 to 325 (SSGSGAEENSNAAA) are enriched in low complexity. The Cell attachment site signature appears at 340–342 (RGD). The disordered stretch occupies residues 347-383 (RAEEKRAEAEAAAEAAAPAAQPEVEKPQKKPVIKPLT). Residues 356–368 (EAAAEAAAPAAQP) show a composition bias toward low complexity.

It belongs to the adenoviridae penton family. As to quaternary structure, interacts (via the cell attachment site RGD) with host heterodimer ITGAV-ITGB5; this interaction promotes virus internalization. Interacts with host WWP1 and WWP2. Interacts with the fiber protein (via N-terminal tail region). Interacts with the capsid vertex protein; this interaction binds the penton base to neighboring peripentonal hexons.

Its subcellular location is the virion. The protein localises to the host nucleus. Functionally, major capsid protein that self-associates to form penton base pentamers, each in the shape of a pentagon, situated at the 12 vertices of the pseudo T=25 capsid. Involved in virus secondary attachment to host cell after initial attachment by the fiber protein. Binds host integrin heterodimer ITGAV-ITGB5 (alphaV-beta5) thereby triggering clathrin-mediated endocytosis of virions. Mediates initial virus attachment to CXADR-negative cells. Binding to integrins ITGAV-ITGB5 also seems to induce macropinocytosis uptake of the virus. As the virus enters the host cell, penton proteins are shed concomitant with virion acidification in the endosome. This chain is Penton protein, found in Homo sapiens (Human).